The sequence spans 120 residues: ATP-dependent Clp protease adapter protein ClpS (120 aa).

Residues 9–32 (LTFNQDHPAEHEDDSSGIAVQESK) are disordered.

The protein belongs to the ClpS family. As to quaternary structure, binds to the N-terminal domain of the chaperone ClpA.

Functionally, involved in the modulation of the specificity of the ClpAP-mediated ATP-dependent protein degradation. This is ATP-dependent Clp protease adapter protein ClpS from Ectopseudomonas mendocina (strain ymp) (Pseudomonas mendocina).